The chain runs to 211 residues: PDR1 up-regulated protein 1 (211 aa).

2 helical membrane-spanning segments follow: residues Ile45–Tyr67 and Arg82–Ala99.

This sequence belongs to the PUP1 family.

It is found in the mitochondrion membrane. In terms of biological role, mitochondrial protein that contributes to the enhanced virulence of C.glabrata strains that acquired azole resistance. This chain is PDR1 up-regulated protein 1, found in Candida glabrata (strain ATCC 2001 / BCRC 20586 / JCM 3761 / NBRC 0622 / NRRL Y-65 / CBS 138) (Yeast).